Consider the following 111-residue polypeptide: Antirepressor protein CarS (111 aa).

In terms of assembly, monomer. Interacts with CarA and CarH.

Its function is as follows. Involved in carotenoid biosynthesis. Antagonizes the transcriptional repressor proteins CarA and CarH by preventing their binding to DNA. Can also dissociate preformed CarA-DNA complexes. Does not bind DNA. In Myxococcus xanthus, this protein is Antirepressor protein CarS (carS).